A 244-amino-acid polypeptide reads, in one-letter code: Probable transcriptional regulatory protein DR_2548 (244 aa).

Residues 1 to 23 (MAGHSKWAQIKRKKGANDKKRSA) are disordered.

The protein belongs to the TACO1 family.

The protein localises to the cytoplasm. The sequence is that of Probable transcriptional regulatory protein DR_2548 from Deinococcus radiodurans (strain ATCC 13939 / DSM 20539 / JCM 16871 / CCUG 27074 / LMG 4051 / NBRC 15346 / NCIMB 9279 / VKM B-1422 / R1).